We begin with the raw amino-acid sequence, 408 residues long: Protein SPATA31F3 (408 aa).

Residues 11–31 (VGYPFYTYGSIIIIALIIWQV) traverse the membrane as a helical segment. The tract at residues 51 to 71 (QKVKQRAKEKTPRARRHSRKE) is disordered. A Phosphoserine modification is found at Ser152. Disordered stretches follow at residues 297–316 (TKTKKAEKSPPSTKRPMKGA) and 351–408 (LPLS…SASS). The segment covering 351-392 (LPLSSGSSKRSPLLTCATQPENPSHVSVSTSAEGTCLPQEST) has biased composition (polar residues).

Belongs to the SPATA31 family.

It is found in the membrane. This is Protein SPATA31F3 (SPATA31F3) from Bos taurus (Bovine).